We begin with the raw amino-acid sequence, 306 residues long: Ribosomal protein L11 methyltransferase (306 aa).

4 residues coordinate S-adenosyl-L-methionine: Thr-154, Gly-179, Asp-201, and Asn-242.

It belongs to the methyltransferase superfamily. PrmA family.

The protein resides in the cytoplasm. It carries out the reaction L-lysyl-[protein] + 3 S-adenosyl-L-methionine = N(6),N(6),N(6)-trimethyl-L-lysyl-[protein] + 3 S-adenosyl-L-homocysteine + 3 H(+). In terms of biological role, methylates ribosomal protein L11. This Stenotrophomonas maltophilia (strain K279a) protein is Ribosomal protein L11 methyltransferase.